Consider the following 487-residue polypeptide: Protein nucleotidyltransferase YdiU (487 aa).

ATP-binding residues include G90, G92, R93, K113, D125, G126, R176, and R183. D252 (proton acceptor) is an active-site residue. 2 residues coordinate Mg(2+): N253 and D262. ATP is bound at residue D262.

The protein belongs to the SELO family. The cofactor is Mg(2+). Requires Mn(2+) as cofactor.

The enzyme catalyses L-seryl-[protein] + ATP = 3-O-(5'-adenylyl)-L-seryl-[protein] + diphosphate. It catalyses the reaction L-threonyl-[protein] + ATP = 3-O-(5'-adenylyl)-L-threonyl-[protein] + diphosphate. The catalysed reaction is L-tyrosyl-[protein] + ATP = O-(5'-adenylyl)-L-tyrosyl-[protein] + diphosphate. It carries out the reaction L-histidyl-[protein] + UTP = N(tele)-(5'-uridylyl)-L-histidyl-[protein] + diphosphate. The enzyme catalyses L-seryl-[protein] + UTP = O-(5'-uridylyl)-L-seryl-[protein] + diphosphate. It catalyses the reaction L-tyrosyl-[protein] + UTP = O-(5'-uridylyl)-L-tyrosyl-[protein] + diphosphate. Nucleotidyltransferase involved in the post-translational modification of proteins. It can catalyze the addition of adenosine monophosphate (AMP) or uridine monophosphate (UMP) to a protein, resulting in modifications known as AMPylation and UMPylation. The polypeptide is Protein nucleotidyltransferase YdiU (Ectopseudomonas mendocina (strain ymp) (Pseudomonas mendocina)).